Here is a 354-residue protein sequence, read N- to C-terminus: Inositol-tetrakisphosphate 1-kinase 1 (354 aa).

Residues 1–16 (MRVHEEASEDKEREVE) show a composition bias toward basic and acidic residues. A disordered region spans residues 1 to 24 (MRVHEEASEDKEREVEEAPDLMPL). 1D-myo-inositol 1,3,4-trisphosphate contacts are provided by Lys53 and Lys95. The ATP site is built by Arg130 and Lys180. The ATP-grasp domain maps to 140–347 (LNLSNAYGEV…FLLSLVQNKY (208 aa)). 1D-myo-inositol 1,3,4-trisphosphate-binding residues include His191 and Lys223. Residues 212–223 (QEFVNHGGILFK) and Ser238 contribute to the ATP site. Residues Asp303, Asp318, and Asn320 each contribute to the Mg(2+) site. Asn320 provides a ligand contact to 1D-myo-inositol 1,3,4-trisphosphate.

The protein belongs to the ITPK1 family. Monomer. The cofactor is Mg(2+). In terms of tissue distribution, expressed in roots, leaves, flowers, anthers and embryos.

It carries out the reaction 1D-myo-inositol 3,4,5,6-tetrakisphosphate + ATP = 1D-myo-inositol 1,3,4,5,6-pentakisphosphate + ADP + H(+). The catalysed reaction is 1D-myo-inositol 1,3,4-trisphosphate + ATP = 1D-myo-inositol 1,3,4,5-tetrakisphosphate + ADP + H(+). The enzyme catalyses 1D-myo-inositol 1,3,4-trisphosphate + ATP = 1D-myo-inositol 1,3,4,6-tetrakisphosphate + ADP + H(+). Its function is as follows. Kinase that can phosphorylate various inositol polyphosphate such as Ins(3,4,5,6)P4 or Ins(1,3,4)P3 and participates in phytic acid biosynthesis in developing seeds. Phytic acid is the primary storage form of phosphorus in cereal grains and other plant seeds. This Oryza sativa subsp. japonica (Rice) protein is Inositol-tetrakisphosphate 1-kinase 1.